A 377-amino-acid chain; its full sequence is Chaperone protein DnaJ (377 aa).

The region spanning 5-69 (EFYDRLGVSK…QKRSAYDQYG (65 aa)) is the J domain. The CR-type zinc finger occupies 133–215 (GVEKDVSYHR…CHGTGHEKET (83 aa)). Zn(2+) contacts are provided by C146, C149, C163, C166, C189, C192, C203, and C206. CXXCXGXG motif repeat units follow at residues 146-153 (CHTCAGSG), 163-170 (CGRCHGSG), 189-196 (CDVCHGSG), and 203-210 (CQTCHGTG).

This sequence belongs to the DnaJ family. In terms of assembly, homodimer. Zn(2+) is required as a cofactor.

It is found in the cytoplasm. In terms of biological role, participates actively in the response to hyperosmotic and heat shock by preventing the aggregation of stress-denatured proteins and by disaggregating proteins, also in an autonomous, DnaK-independent fashion. Unfolded proteins bind initially to DnaJ; upon interaction with the DnaJ-bound protein, DnaK hydrolyzes its bound ATP, resulting in the formation of a stable complex. GrpE releases ADP from DnaK; ATP binding to DnaK triggers the release of the substrate protein, thus completing the reaction cycle. Several rounds of ATP-dependent interactions between DnaJ, DnaK and GrpE are required for fully efficient folding. Also involved, together with DnaK and GrpE, in the DNA replication of plasmids through activation of initiation proteins. The protein is Chaperone protein DnaJ of Streptococcus uberis (strain ATCC BAA-854 / 0140J).